A 409-amino-acid chain; its full sequence is Elongation factor Tu (409 aa).

Residues 10 to 214 enclose the tr-type G domain; that stretch reads KPHLNIGTIG…AVDSFIPTPE (205 aa). Residues 19 to 26 form a G1 region; the sequence is GHVDHGKT. 19–26 provides a ligand contact to GTP; it reads GHVDHGKT. Thr26 is a binding site for Mg(2+). A G2 region spans residues 60-64; it reads GITIN. The segment at 81–84 is G3; the sequence is DCPG. Residues 81–85 and 136–139 contribute to the GTP site; these read DCPGH and NKED. Residues 136–139 are G4; sequence NKED. Positions 174–176 are G5; sequence SGL.

The protein belongs to the TRAFAC class translation factor GTPase superfamily. Classic translation factor GTPase family. EF-Tu/EF-1A subfamily. As to quaternary structure, monomer.

It localises to the cytoplasm. It carries out the reaction GTP + H2O = GDP + phosphate + H(+). Functionally, GTP hydrolase that promotes the GTP-dependent binding of aminoacyl-tRNA to the A-site of ribosomes during protein biosynthesis. This chain is Elongation factor Tu, found in Nostoc punctiforme (strain ATCC 29133 / PCC 73102).